Consider the following 219-residue polypeptide: Lipid transferase CIDEB (219 aa).

T18 carries the phosphothreonine modification. Residues 34–110 (PQRPFRVCDH…VLEQGQSWSP (77 aa)) enclose the CIDE-N domain.

This sequence belongs to the CIDE family. As to quaternary structure, interacts with DFFA. Interacts with DFFB; inhibited by DFFB. Interacts with APOB. Interacts with PREB/SEC12; facilitating loading of SCAP-SREBP into COPII vesicles. As to expression, highly enriched in the liver.

Its subcellular location is the lipid droplet. The protein localises to the endoplasmic reticulum membrane. The protein resides in the golgi apparatus. It localises to the cytoplasmic vesicle. It is found in the COPI-coated vesicle. Lipid transferase specifically expressed in hepatocytes, which promotes unilocular lipid droplet formation by mediating lipid droplet fusion. Lipid droplet fusion promotes their enlargement, restricting lipolysis and favoring lipid storage. Localizes on the lipid droplet surface, at focal contact sites between lipid droplets, and mediates atypical lipid droplet fusion by promoting directional net neutral lipid transfer from the smaller to larger lipid droplets. The transfer direction may be driven by the internal pressure difference between the contacting lipid droplet pair. Promotes lipid exchange and lipid droplet fusion in both small and large lipid droplet-containing hepatocytes. In addition to its role in lipid droplet fusion, also involved in cytoplasmic vesicle biogenesis and transport. Required for very-low-density lipoprotein (VLDL) lipidation and maturation. Probably involved in the biogenesis of VLDL transport vesicles by forming a COPII vesicle coat and facilitating the formation of endoplasmic reticulum-derived large vesicles. Also involved in sterol-regulated export of the SCAP-SREBP complex, composed of SCAP, SREBF1/SREBP1 and SREBF2/SREBP2, by promoting loading of SCAP-SREBP into COPII vesicles. May also activate apoptosis. The sequence is that of Lipid transferase CIDEB from Mus musculus (Mouse).